The chain runs to 598 residues: UvrABC system protein C (598 aa).

The region spanning 13–91 (TLPGVYRMVD…IKGLKPRFNI (79 aa)) is the GIY-YIG domain. Residues 200 to 235 (TALTEEITAQMNAAAENLDFETAAYLRDRLRMLATV) enclose the UVR domain.

It belongs to the UvrC family. Interacts with UvrB in an incision complex.

The protein localises to the cytoplasm. The UvrABC repair system catalyzes the recognition and processing of DNA lesions. UvrC both incises the 5' and 3' sides of the lesion. The N-terminal half is responsible for the 3' incision and the C-terminal half is responsible for the 5' incision. This Thiobacillus denitrificans (strain ATCC 25259 / T1) protein is UvrABC system protein C.